The sequence spans 517 residues: Protein translocase subunit SecD (517 aa).

6 helical membrane passes run 5-25 (LRWI…FPLD), 357-377 (IWAG…YYKF), 380-400 (FIAS…MGMF), 407-427 (PGIA…VLIF), 455-475 (IIDS…FGTG), and 479-499 (GFAV…VTLS).

Belongs to the SecD/SecF family. SecD subfamily. As to quaternary structure, forms a complex with SecF. Part of the essential Sec protein translocation apparatus which comprises SecA, SecYEG and auxiliary proteins SecDF. Other proteins may also be involved.

It is found in the cell inner membrane. Part of the Sec protein translocase complex. Interacts with the SecYEG preprotein conducting channel. SecDF uses the proton motive force (PMF) to complete protein translocation after the ATP-dependent function of SecA. The sequence is that of Protein translocase subunit SecD from Calditerrivibrio nitroreducens (strain DSM 19672 / NBRC 101217 / Yu37-1).